Consider the following 97-residue polypeptide: MICOS complex subunit MIC12 (97 aa).

The chain crosses the membrane as a helical span at residues 7 to 24; the sequence is LTSITAVSSTLAASYYFY.

It belongs to the MICOS complex subunit Mic12 family. As to quaternary structure, component of the mitochondrial contact site and cristae organizing system (MICOS) complex.

The protein resides in the mitochondrion inner membrane. Component of the MICOS complex, a large protein complex of the mitochondrial inner membrane that plays crucial roles in the maintenance of crista junctions, inner membrane architecture, and formation of contact sites to the outer membrane. In Zygosaccharomyces rouxii (strain ATCC 2623 / CBS 732 / NBRC 1130 / NCYC 568 / NRRL Y-229), this protein is MICOS complex subunit MIC12 (AIM5).